A 189-amino-acid chain; its full sequence is Putative biopolymer transport protein ExbB-like 1 (189 aa).

A run of 3 helical transmembrane segments spans residues 14-34 (FVTTLVLVWISLYLVMTLWVF), 99-119 (LVVLSIISSTAPFIGLFGTVV), and 147-167 (LIATAAGILAAIPAYSFYLIL).

It belongs to the ExbB/TolQ family.

The protein localises to the cell inner membrane. The sequence is that of Putative biopolymer transport protein ExbB-like 1 from Helicobacter pylori (strain J99 / ATCC 700824) (Campylobacter pylori J99).